A 468-amino-acid chain; its full sequence is 6-phospho-beta-galactosidase (468 aa).

D-galactose 6-phosphate is bound by residues Q19, H116, N159, E160, and N297. E160 acts as the Proton donor in catalysis. E375 serves as the catalytic Nucleophile. Residues S428, W429, K435, and Y437 each contribute to the D-galactose 6-phosphate site.

This sequence belongs to the glycosyl hydrolase 1 family.

The enzyme catalyses a 6-phospho-beta-D-galactoside + H2O = D-galactose 6-phosphate + an alcohol. It functions in the pathway carbohydrate metabolism; lactose degradation; D-galactose 6-phosphate and beta-D-glucose from lactose 6-phosphate: step 1/1. The chain is 6-phospho-beta-galactosidase from Lactococcus lactis subsp. lactis (Streptococcus lactis).